A 439-amino-acid polypeptide reads, in one-letter code: Xylose isomerase (439 aa).

Catalysis depends on residues H98 and D101. E229, E265, H268, D293, D304, D306, and D335 together coordinate Mg(2+).

It belongs to the xylose isomerase family. As to quaternary structure, homotetramer. Mg(2+) serves as cofactor.

It is found in the cytoplasm. It catalyses the reaction alpha-D-xylose = alpha-D-xylulofuranose. Its function is as follows. Involved in D-xylose catabolism. In Staphylococcus xylosus, this protein is Xylose isomerase (xylA).